A 227-amino-acid polypeptide reads, in one-letter code: Probable GTP-binding protein EngB (227 aa).

The EngB-type G domain maps to 41–216; the sequence is GRPEVAFAGR…RAEIARFAVP (176 aa). GTP is bound by residues 49 to 56, 76 to 80, 94 to 97, 161 to 164, and 195 to 197; these read GRSNVGKS, GRTKQ, DMPG, TKCD, and TSS. Residues serine 56 and threonine 78 each contribute to the Mg(2+) site.

This sequence belongs to the TRAFAC class TrmE-Era-EngA-EngB-Septin-like GTPase superfamily. EngB GTPase family. It depends on Mg(2+) as a cofactor.

Necessary for normal cell division and for the maintenance of normal septation. The protein is Probable GTP-binding protein EngB of Gluconobacter oxydans (strain 621H) (Gluconobacter suboxydans).